Reading from the N-terminus, the 205-residue chain is Glycerol-3-phosphate acyltransferase (205 aa).

Topologically, residues 1 to 3 (MSA) are periplasmic. A helical membrane pass occupies residues 4–24 (IAPGMILFAYLCGSISSAILV). Residues 25 to 52 (CRIAGLPDPRESGSGNPGATNVLRIGGK) are Cytoplasmic-facing. The helical transmembrane segment at 53 to 73 (GAAVAVLIFDILKGMLPVWGA) threads the bilayer. Over 74–80 (YALGITP) the chain is Periplasmic. A helical membrane pass occupies residues 81-101 (FWLGLIAIAACLGHIWPVFFG). Residues 102–111 (FKGGKGVATA) lie on the Cytoplasmic side of the membrane. Residues 112 to 132 (FGAIAPIGWDLTGVIAGTWLL) form a helical membrane-spanning segment. Residues 133–137 (TVLLS) are Periplasmic-facing. The chain crosses the membrane as a helical span at residues 138-158 (GYSSLGAIVSALIAPFYVWWF). Residues 159 to 205 (KPQFTFPVSMLSCLILLRHHDNIQRLWRRQETKIWTKLKKKREKESK) are Cytoplasmic-facing.

It belongs to the PlsY family. As to quaternary structure, probably interacts with PlsX.

It is found in the cell inner membrane. The catalysed reaction is sn-glycerol 3-phosphate + an acyl-CoA = a 1-acyl-sn-glycero-3-phosphate + CoA. It carries out the reaction a fatty acyl-[ACP] + sn-glycerol 3-phosphate = a 1-acyl-sn-glycero-3-phosphate + holo-[ACP]. Its pathway is lipid metabolism; phospholipid metabolism. Its function is as follows. Catalyzes the transfer of an acyl group from acyl-ACP to glycerol-3-phosphate (G3P) to form lysophosphatidic acid (LPA). This enzyme can also utilize acyl-CoA as fatty acyl donor, but not acyl-PO(4). This chain is Glycerol-3-phosphate acyltransferase, found in Salmonella arizonae (strain ATCC BAA-731 / CDC346-86 / RSK2980).